A 149-amino-acid chain; its full sequence is Aspartate 1-decarboxylase (149 aa).

Ser-25 acts as the Schiff-base intermediate with substrate; via pyruvic acid in catalysis. The residue at position 25 (Ser-25) is a Pyruvic acid (Ser). Substrate is bound at residue Thr-57. Catalysis depends on Tyr-58, which acts as the Proton donor. Position 73 to 75 (73 to 75 (GAA)) interacts with substrate. The tract at residues 119–149 (GDPAAALPGDPSSLRGDVLDPAGARGLGGGA) is disordered.

It belongs to the PanD family. Heterooctamer of four alpha and four beta subunits. Pyruvate serves as cofactor. In terms of processing, is synthesized initially as an inactive proenzyme, which is activated by self-cleavage at a specific serine bond to produce a beta-subunit with a hydroxyl group at its C-terminus and an alpha-subunit with a pyruvoyl group at its N-terminus.

It is found in the cytoplasm. It catalyses the reaction L-aspartate + H(+) = beta-alanine + CO2. Its pathway is cofactor biosynthesis; (R)-pantothenate biosynthesis; beta-alanine from L-aspartate: step 1/1. Functionally, catalyzes the pyruvoyl-dependent decarboxylation of aspartate to produce beta-alanine. The chain is Aspartate 1-decarboxylase from Parafrankia sp. (strain EAN1pec).